The following is a 325-amino-acid chain: Beta-ketoacyl-[acyl-carrier-protein] synthase III (325 aa).

Residues cysteine 116 and histidine 252 contribute to the active site. An ACP-binding region spans residues 253–257 (QANLR). Residue asparagine 282 is part of the active site.

The protein belongs to the thiolase-like superfamily. FabH family. As to quaternary structure, homodimer.

It is found in the cytoplasm. It carries out the reaction malonyl-[ACP] + acetyl-CoA + H(+) = 3-oxobutanoyl-[ACP] + CO2 + CoA. Its pathway is lipid metabolism; fatty acid biosynthesis. Functionally, catalyzes the condensation reaction of fatty acid synthesis by the addition to an acyl acceptor of two carbons from malonyl-ACP. Catalyzes the first condensation reaction which initiates fatty acid synthesis and may therefore play a role in governing the total rate of fatty acid production. Possesses both acetoacetyl-ACP synthase and acetyl transacylase activities. Its substrate specificity determines the biosynthesis of branched-chain and/or straight-chain of fatty acids. The chain is Beta-ketoacyl-[acyl-carrier-protein] synthase III from Xanthomonas campestris pv. campestris (strain ATCC 33913 / DSM 3586 / NCPPB 528 / LMG 568 / P 25).